Reading from the N-terminus, the 244-residue chain is tRNA (guanine-N(1)-)-methyltransferase (244 aa).

S-adenosyl-L-methionine contacts are provided by residues glycine 110 and 129 to 134 (IGDYIL).

This sequence belongs to the RNA methyltransferase TrmD family. Homodimer.

Its subcellular location is the cytoplasm. It carries out the reaction guanosine(37) in tRNA + S-adenosyl-L-methionine = N(1)-methylguanosine(37) in tRNA + S-adenosyl-L-homocysteine + H(+). Functionally, specifically methylates guanosine-37 in various tRNAs. This chain is tRNA (guanine-N(1)-)-methyltransferase, found in Syntrophomonas wolfei subsp. wolfei (strain DSM 2245B / Goettingen).